Consider the following 471-residue polypeptide: Argininosuccinate lyase (471 aa).

It belongs to the lyase 1 family. Argininosuccinate lyase subfamily.

It localises to the cytoplasm. The catalysed reaction is 2-(N(omega)-L-arginino)succinate = fumarate + L-arginine. It functions in the pathway amino-acid biosynthesis; L-arginine biosynthesis; L-arginine from L-ornithine and carbamoyl phosphate: step 3/3. In Cereibacter sphaeroides (strain ATCC 17025 / ATH 2.4.3) (Rhodobacter sphaeroides), this protein is Argininosuccinate lyase.